The primary structure comprises 37 residues: Large ribosomal subunit protein bL36 (37 aa).

Belongs to the bacterial ribosomal protein bL36 family.

The protein is Large ribosomal subunit protein bL36 of Shewanella baltica (strain OS223).